The following is a 307-amino-acid chain: Methionyl-tRNA formyltransferase (307 aa).

108–111 (SLLP) is a binding site for (6S)-5,6,7,8-tetrahydrofolate.

Belongs to the Fmt family.

The enzyme catalyses L-methionyl-tRNA(fMet) + (6R)-10-formyltetrahydrofolate = N-formyl-L-methionyl-tRNA(fMet) + (6S)-5,6,7,8-tetrahydrofolate + H(+). Functionally, attaches a formyl group to the free amino group of methionyl-tRNA(fMet). The formyl group appears to play a dual role in the initiator identity of N-formylmethionyl-tRNA by promoting its recognition by IF2 and preventing the misappropriation of this tRNA by the elongation apparatus. The polypeptide is Methionyl-tRNA formyltransferase (Xanthomonas euvesicatoria pv. vesicatoria (strain 85-10) (Xanthomonas campestris pv. vesicatoria)).